The following is a 216-amino-acid chain: 2-phospho-L-lactate guanylyltransferase (216 aa).

Belongs to the CofC family. As to quaternary structure, homodimer.

It catalyses the reaction (2S)-2-phospholactate + GTP + H(+) = (2S)-lactyl-2-diphospho-5'-guanosine + diphosphate. The protein operates within cofactor biosynthesis; coenzyme F420 biosynthesis. Functionally, guanylyltransferase that catalyzes the activation of (2S)-2-phospholactate (2-PL) as (2S)-lactyl-2-diphospho-5'-guanosine, via the condensation of 2-PL with GTP. It is involved in the biosynthesis of coenzyme F420, a hydride carrier cofactor. This chain is 2-phospho-L-lactate guanylyltransferase, found in Methanocaldococcus infernus (strain DSM 11812 / JCM 15783 / ME).